Consider the following 187-residue polypeptide: Elongation factor P 1 (187 aa).

This sequence belongs to the elongation factor P family.

It localises to the cytoplasm. It functions in the pathway protein biosynthesis; polypeptide chain elongation. Functionally, involved in peptide bond synthesis. Stimulates efficient translation and peptide-bond synthesis on native or reconstituted 70S ribosomes in vitro. Probably functions indirectly by altering the affinity of the ribosome for aminoacyl-tRNA, thus increasing their reactivity as acceptors for peptidyl transferase. This chain is Elongation factor P 1, found in Geobacter sulfurreducens (strain ATCC 51573 / DSM 12127 / PCA).